Reading from the N-terminus, the 650-residue chain is PTS system mannose-specific EIIBCA component (650 aa).

Positions Met-1–Asn-98 constitute a PTS EIIB type-2 domain. The active-site Phosphocysteine intermediate; for EIIB activity is the Cys-9. Residues Ile-123–Val-456 form the PTS EIIC type-2 domain. Transmembrane regions (helical) follow at residues Phe-133–Gly-153, Ile-174–Ile-194, Gly-199–Ala-219, Gly-221–Ile-241, Ile-256–Gly-276, Ser-297–Val-317, and Ile-336–Phe-356. A Phosphoserine modification is found at Ser-365. The next 3 helical transmembrane spans lie at Met-369–Ala-389, Val-396–Val-416, and Val-436–Val-456. Residues Asp-504–Ile-649 enclose the PTS EIIA type-2 domain. His-566 functions as the Tele-phosphohistidine intermediate; for EIIA activity in the catalytic mechanism.

The protein localises to the cell membrane. It carries out the reaction D-mannose(out) + N(pros)-phospho-L-histidyl-[protein] = D-mannose 6-phosphate(in) + L-histidyl-[protein]. In terms of biological role, the phosphoenolpyruvate-dependent sugar phosphotransferase system (sugar PTS), a major carbohydrate active -transport system, catalyzes the phosphorylation of incoming sugar substrates concomitantly with their translocation across the cell membrane. This system is involved in mannose transport. This chain is PTS system mannose-specific EIIBCA component (manP), found in Bacillus subtilis (strain 168).